A 227-amino-acid chain; its full sequence is ATP-dependent dethiobiotin synthetase BioD (227 aa).

13 to 18 (DVGKTV) provides a ligand contact to ATP. A Mg(2+)-binding site is contributed by T17. The active site involves K38. Residues D55, 116–119 (EGAG), and 176–177 (NR) contribute to the ATP site. Residues D55 and E116 each contribute to the Mg(2+) site.

This sequence belongs to the dethiobiotin synthetase family. As to quaternary structure, homodimer. The cofactor is Mg(2+).

Its subcellular location is the cytoplasm. It catalyses the reaction (7R,8S)-7,8-diammoniononanoate + CO2 + ATP = (4R,5S)-dethiobiotin + ADP + phosphate + 3 H(+). It functions in the pathway cofactor biosynthesis; biotin biosynthesis; biotin from 7,8-diaminononanoate: step 1/2. Its function is as follows. Catalyzes a mechanistically unusual reaction, the ATP-dependent insertion of CO2 between the N7 and N8 nitrogen atoms of 7,8-diaminopelargonic acid (DAPA, also called 7,8-diammoniononanoate) to form a ureido ring. This is ATP-dependent dethiobiotin synthetase BioD from Aliivibrio salmonicida (strain LFI1238) (Vibrio salmonicida (strain LFI1238)).